The following is a 450-amino-acid chain: MSHSACPKPATARHSQALTGEIRIPGDKSISHRSFMFGGLASGKTRITGLLEGEDVINTGRAMQAMGARIRKEGDVWIINGVGNGCLLQPEAPLDFGNAGTGARLTMGLVGTYDMKTSFIGDASLSKRPMGRVLNPLREMGVQVEAAEGDRMPLTLIGPRTANPIAYRVPMASAQVKSAVLLAGLNTPGVTTVIEPVMTRDHTEKMLQGFGADLTVETDKDGVRHIRIVGQGKLTGQTIDVPGDPSSTAFPLVAALLVEGSDVTIRNVLMNPTRTGLILTLQEMGADIEIIDPRLAGGEDVADLRVRASKLKGVVVPPERAPSMIDEYPVLAIAASFAEGETVMDGLDELRVKESDRLAAVARGLEANGVDCTEGEMSLTVRGRPGGKGLGGGTVATHLDHRIAMSFLVMGLASEKPVTVDDSTMIATSFPEFMGMMAGLGAKIAESGAE.

The 3-phosphoshikimate site is built by K28, S29, and R33. K28 contributes to the phosphoenolpyruvate binding site. Residues G100 and R128 each coordinate phosphoenolpyruvate. S173, Q175, D326, and K353 together coordinate 3-phosphoshikimate. Residue Q175 participates in phosphoenolpyruvate binding. The Proton acceptor role is filled by D326. 2 residues coordinate phosphoenolpyruvate: R357 and R402.

This sequence belongs to the EPSP synthase family. Monomer.

It is found in the cytoplasm. It catalyses the reaction 3-phosphoshikimate + phosphoenolpyruvate = 5-O-(1-carboxyvinyl)-3-phosphoshikimate + phosphate. Its pathway is metabolic intermediate biosynthesis; chorismate biosynthesis; chorismate from D-erythrose 4-phosphate and phosphoenolpyruvate: step 6/7. Functionally, catalyzes the transfer of the enolpyruvyl moiety of phosphoenolpyruvate (PEP) to the 5-hydroxyl of shikimate-3-phosphate (S3P) to produce enolpyruvyl shikimate-3-phosphate and inorganic phosphate. The sequence is that of 3-phosphoshikimate 1-carboxyvinyltransferase from Brucella canis (strain ATCC 23365 / NCTC 10854 / RM-666).